Here is a 514-residue protein sequence, read N- to C-terminus: Cytochrome P450 94A1 (514 aa).

A helical transmembrane segment spans residues 7–29 (EVLLPYLLPLLLLILPTTIFFLT). Residue Cys458 coordinates heme.

Belongs to the cytochrome P450 family. Heme serves as cofactor.

The protein localises to the endoplasmic reticulum membrane. In terms of biological role, catalyzes the omega-hydroxylation of various fatty acids (FA) from 10 to 18 carbon atoms. The substrate specificity is higher for laurate &gt; palmitate &gt; myristate &gt; linolenate &gt; linoleate &gt; oleate &gt; caprate. May play a minor role in cutin synthesis and could be involved in plant defense. This Vicia sativa (Spring vetch) protein is Cytochrome P450 94A1 (CYP94A1).